A 740-amino-acid chain; its full sequence is Protein SMY2 (740 aa).

Residues Ser-12 and Ser-96 each carry the phosphoserine modification. The residue at position 129 (Thr-129) is a Phosphothreonine. The 57-residue stretch at Glu-205 to Gly-261 folds into the GYF domain. Position 311 is a phosphothreonine (Thr-311). Disordered regions lie at residues Ile-346–Leu-510, Pro-523–Lys-548, and Gln-567–Lys-592. A compositionally biased stretch (basic and acidic residues) spans Glu-364–Thr-439. Residues Glu-369–Gln-440 are a coiled coil. The span at Leu-452–Ser-467 shows a compositional bias: low complexity. Residues Ala-474–Thr-486 show a composition bias toward polar residues. The segment covering Asn-500–Leu-510 has biased composition (basic and acidic residues). Polar residues predominate over residues Pro-523–Lys-536. Phosphoserine is present on Ser-545. Ser-602 is modified (phosphoserine).

It belongs to the SMY2/mpd2 family. As to quaternary structure, interacts with EAP1 and MSL5 (via the GYP domain).

It is found in the cytoplasm. Its function is as follows. Suppressor of the MYO2 gene. This chain is Protein SMY2 (SMY2), found in Saccharomyces cerevisiae (strain ATCC 204508 / S288c) (Baker's yeast).